The chain runs to 100 residues: Urease subunit gamma (100 aa).

It belongs to the urease gamma subunit family. Heterotrimer of UreA (gamma), UreB (beta) and UreC (alpha) subunits. Three heterotrimers associate to form the active enzyme.

The protein resides in the cytoplasm. It catalyses the reaction urea + 2 H2O + H(+) = hydrogencarbonate + 2 NH4(+). It functions in the pathway nitrogen metabolism; urea degradation; CO(2) and NH(3) from urea (urease route): step 1/1. This is Urease subunit gamma from Bacillus cereus (strain ATCC 10987 / NRS 248).